The following is a 341-amino-acid chain: HTH-type transcriptional repressor PurR (341 aa).

The 55-residue stretch at 2–56 (ATIKDVAKRANVSTTTVSHVINKTRFVAEETRNAVWAAIKELHYSPSAVARSLKV) folds into the HTH lacI-type domain. The segment at residues 4 to 23 (IKDVAKRANVSTTTVSHVIN) is a DNA-binding region (H-T-H motif). The DNA-binding element occupies 48–56 (SAVARSLKV). 5 residues coordinate hypoxanthine: Tyr-73, Arg-190, Thr-192, Phe-221, and Asp-275.

In terms of assembly, homodimer.

Its pathway is purine metabolism; purine nucleotide biosynthesis [regulation]. Functionally, is the main repressor of the genes involved in the de novo synthesis of purine nucleotides, regulating purB, purC, purEK, purF, purHD, purL, purMN and guaBA expression. In addition, it participates in the regulation or coregulation of genes involved in de novo pyrimidine nucleotide biosynthesis, salvage and uptake (pyrC, pyrD, carAB and codBA), and of several genes encoding enzymes necessary for nucleotide and polyamine biosynthesis (prsA, glyA, gcvTHP, speA, glnB). Binds to a 16-bp palindromic sequence located within the promoter region of pur regulon genes. The consensus binding sequence is 5'-ACGCAAACGTTTTCNT-3'. PurR is allosterically activated to bind its cognate DNA by binding the purine corepressors, hypoxanthine or guanine, thereby effecting transcription repression. The polypeptide is HTH-type transcriptional repressor PurR (purR) (Escherichia coli (strain K12)).